The sequence spans 81 residues: Small ribosomal subunit protein bS16 (81 aa).

This sequence belongs to the bacterial ribosomal protein bS16 family.

In Desulfotalea psychrophila (strain LSv54 / DSM 12343), this protein is Small ribosomal subunit protein bS16.